Consider the following 1321-residue polypeptide: MEPPGRRRGRAQPPLLLPLSLLALLALLGGGGGGGAAALPAGCKHDGRPRGAGRAAGAAEGKVVCSSLELAQVLPPDTLPNRTVTLILSNNKISELKNGSFSGLSLLERLDLRNNLISSIDPGAFWGLSSLKRLDLTNNRIGCLNADIFRGLTNLVRLNLSGNLFSSLSQGTFDYLASLRSLEFQTEYLLCDCNILWMHRWVKEKNITVRDTRCVYPKSLQAQPVTGVKQELLTCDPPLELPSFYMTPSHRQVVFEGDSLPFQCMASYIDQDMQVLWYQDGRIVETDESQGIFVEKNMIHNCSLIASALTISNIQAGSTGNWGCHVQTKRGNNTRTVDIVVLESSAQYCPPERVVNNKGDFRWPRTLAGITAYLQCTRNTHGSGIYPGNPQDERKAWRRCDRGGFWADDDYSRCQYANDVTRVLYMFNQMPLNLTNAVATARQLLAYTVEAANFSDKMDVIFVAEMIEKFGRFTKEEKSKELGDVMVDIASNIMLADERVLWLAQREAKACSRIVQCLQRIATYRLAGGAHVYSTYSPNIALEAYVIKSTGFTGMTCTVFQKVAASDRTGLSDYGRRDPEGNLDKQLSFKCNVSNTFSSLALKNTIVEASIQLPPSLFSPKQKRELRPTDDSLYKLQLIAFRNGKLFPATGNSTNLADDGKRRTVVTPVILTKIDGVNVDTHHIPVNVTLRRIAHGADAVAARWDFDLLNGQGGWKSDGCHILYSDENITTIQCYSLSNYAVLMDLTGSELYTQAASLLHPVVYTTAIILLLCLLAVIVSYIYHHSLIRISLKSWHMLVNLCFHIFLTCVVFVGGITQTRNASICQAVGIILHYSTLATVLWVGVTARNIYKQVTKKAKRCQDPDEPPPPPRPMLRFYLIGGGIPIIVCGITAAANIKNYGSRPNAPYCWMAWEPSLGAFYGPASFITFVNCMYFLSIFIQLKRHPERKYELKEPTEEQQRLAANENGEINHQDSMSLSLISTSALENEHTFHSQLLGASLTLLLYVALWMFGALAVSLYYPLDLVFSFVFGATSLSFSAFFVVHHCVNREDVRLAWIMTCCPGRSSYSVQVNVQPPNSNGTNGEAPKCPNSSAESSCTNKSASSFKNSSQGCKLTNLQAAAAQCHANSLPLNSTPQLDNSLTEHSMDNDIKMHVAPLEVQFRTNVHSSRHHKNRSKGHRASRLTVLREYAYDVPTSVEGSVQNGLPKSRLGNNEGHSRSRRAYLAYRERQYNPPQQDSSDACSTLPKSSRNFEKPVSTTSKKDALRKPAVVELENQQKSYGLNLAIQNGPIKSNGQEGPLLGTDSTGNVRTGLWKHETTV.

Residues 1–33 (MEPPGRRRGRAQPPLLLPLSLLALLALLGGGGG) form the signal peptide. The Extracellular segment spans residues 34–761 (GGAAALPAGC…YTQAASLLHP (728 aa)). Asparagine 81 and asparagine 98 each carry an N-linked (GlcNAc...) asparagine glycan. LRR repeat units follow at residues 82–103 (RTVTLILSNNKISELKNGSFSG), 106–127 (LLERLDLRNNLISSIDPGAFWG), 130–151 (SLKRLDLTNNRIGCLNADIFRG), and 154–175 (NLVRLNLSGNLFSSLSQGTFDY). N-linked (GlcNAc...) asparagine glycosylation is found at asparagine 159, asparagine 206, asparagine 301, asparagine 332, asparagine 433, asparagine 453, and asparagine 592. The LRRCT domain occupies 187–237 (EYLLCDCNILWMHRWVKEKNITVRDTRCVYPKSLQAQPVTGVKQELLTCDP). The region spanning 242–340 (PSFYMTPSHR…GNNTRTVDIV (99 aa)) is the Ig-like domain. A disulfide bond links cysteine 264 and cysteine 324. In terms of domain architecture, GAIN-B spans 583 to 750 (LDKQLSFKCN…AVLMDLTGSE (168 aa)). Residues 594–620 (SNTFSSLALKNTIVEASIQLPPSLFSP) form an LRR 5 repeat. Asparagine 652, asparagine 687, and asparagine 728 each carry an N-linked (GlcNAc...) asparagine glycan. Residues 701–750 (AARWDFDLLNGQGGWKSDGCHILYSDENITTIQCYSLSNYAVLMDLTGSE) form a GPS region. A disulfide bridge links cysteine 720 with cysteine 734. Residues 762 to 782 (VVYTTAIILLLCLLAVIVSYI) traverse the membrane as a helical segment. Residues 783–796 (YHHSLIRISLKSWH) lie on the Cytoplasmic side of the membrane. A helical transmembrane segment spans residues 797-817 (MLVNLCFHIFLTCVVFVGGIT). Residues 818–826 (QTRNASICQ) lie on the Extracellular side of the membrane. Asparagine 821 is a glycosylation site (N-linked (GlcNAc...) asparagine). The chain crosses the membrane as a helical span at residues 827–847 (AVGIILHYSTLATVLWVGVTA). At 848–876 (RNIYKQVTKKAKRCQDPDEPPPPPRPMLR) the chain is on the cytoplasmic side. The chain crosses the membrane as a helical span at residues 877–897 (FYLIGGGIPIIVCGITAAANI). Residues 898 to 919 (KNYGSRPNAPYCWMAWEPSLGA) lie on the Extracellular side of the membrane. The chain crosses the membrane as a helical span at residues 920–940 (FYGPASFITFVNCMYFLSIFI). Residues 941–996 (QLKRHPERKYELKEPTEEQQRLAANENGEINHQDSMSLSLISTSALENEHTFHSQL) are Cytoplasmic-facing. A helical membrane pass occupies residues 997–1017 (LGASLTLLLYVALWMFGALAV). Over 1018–1024 (SLYYPLD) the chain is Extracellular. A helical membrane pass occupies residues 1025 to 1045 (LVFSFVFGATSLSFSAFFVVH). The Cytoplasmic portion of the chain corresponds to 1046–1321 (HCVNREDVRL…TGLWKHETTV (276 aa)). The segment covering 1073–1083 (NVQPPNSNGTN) has biased composition (polar residues). Disordered regions lie at residues 1073-1094 (NVQPPNSNGTNGEAPKCPNSSA), 1198-1219 (VEGSVQNGLPKSRLGNNEGHSR), 1231-1265 (QYNPPQQDSSDACSTLPKSSRNFEKPVSTTSKKDA), and 1294-1321 (SNGQEGPLLGTDSTGNVRTGLWKHETTV). Positions 1233–1250 (NPPQQDSSDACSTLPKSS) are enriched in polar residues. Residues 1319 to 1321 (TTV) carry the PDZ-binding motif.

This sequence belongs to the G-protein coupled receptor 2 family. Adhesion G-protein coupled receptor (ADGR) subfamily. As to quaternary structure, interacts (via PDZ-binding motif) with DLG1.

The protein localises to the membrane. Functionally, orphan receptor that may have a role in planar cell polarity pathway. This is Adhesion G protein-coupled receptor A3 from Homo sapiens (Human).